A 286-amino-acid chain; its full sequence is Fructose-bisphosphate aldolase (286 aa).

Ser50 is a D-glyceraldehyde 3-phosphate binding site. The active-site Proton donor is Asp85. Zn(2+) is bound by residues His86, Asp107, Glu137, and His181. Gly182 is a dihydroxyacetone phosphate binding site. His209 provides a ligand contact to Zn(2+). Residues 210–212 (GGT) and 231–234 (NVNT) each bind dihydroxyacetone phosphate.

Belongs to the class II fructose-bisphosphate aldolase family. Zn(2+) serves as cofactor.

The catalysed reaction is beta-D-fructose 1,6-bisphosphate = D-glyceraldehyde 3-phosphate + dihydroxyacetone phosphate. The protein operates within carbohydrate degradation; glycolysis; D-glyceraldehyde 3-phosphate and glycerone phosphate from D-glucose: step 4/4. Its function is as follows. Catalyzes the aldol condensation of dihydroxyacetone phosphate (DHAP or glycerone-phosphate) with glyceraldehyde 3-phosphate (G3P) to form fructose 1,6-bisphosphate (FBP) in gluconeogenesis and the reverse reaction in glycolysis. This is Fructose-bisphosphate aldolase (fba) from Staphylococcus epidermidis (strain ATCC 35984 / DSM 28319 / BCRC 17069 / CCUG 31568 / BM 3577 / RP62A).